The sequence spans 95 residues: Putative protein RDUR (95 aa).

A compositionally biased stretch (basic and acidic residues) spans 1 to 12; sequence MNNSFNKEDRMS. The disordered stretch occupies residues 1–20; that stretch reads MNNSFNKEDRMSSDTMVGSC.

Its function is as follows. Could play a role in innate immunity against viruses. This chain is Putative protein RDUR, found in Homo sapiens (Human).